A 235-amino-acid polypeptide reads, in one-letter code: Probable RNA 2'-phosphotransferase (235 aa).

The protein belongs to the KptA/TPT1 family.

Its function is as follows. Removes the 2'-phosphate from RNA via an intermediate in which the phosphate is ADP-ribosylated by NAD followed by a presumed transesterification to release the RNA and generate ADP-ribose 1''-2''-cyclic phosphate (APPR&gt;P). May function as an ADP-ribosylase. The protein is Probable RNA 2'-phosphotransferase of Thermoplasma volcanium (strain ATCC 51530 / DSM 4299 / JCM 9571 / NBRC 15438 / GSS1).